The sequence spans 157 residues: Pyruvoyl-dependent arginine decarboxylase (157 aa).

A Pyruvic acid (Ser) modification is found at Ser-44.

The protein belongs to the PdaD family. Pyruvate is required as a cofactor.

The catalysed reaction is L-arginine + H(+) = agmatine + CO2. This Thermococcus kodakarensis (strain ATCC BAA-918 / JCM 12380 / KOD1) (Pyrococcus kodakaraensis (strain KOD1)) protein is Pyruvoyl-dependent arginine decarboxylase.